The primary structure comprises 309 residues: 2-phospho-L-lactate transferase (309 aa).

Positions 50 and 89 each coordinate 7,8-didemethyl-8-hydroxy-5-deazariboflavin.

It belongs to the CofD family. As to quaternary structure, homodimer. Mg(2+) serves as cofactor.

The catalysed reaction is (2S)-lactyl-2-diphospho-5'-guanosine + 7,8-didemethyl-8-hydroxy-5-deazariboflavin = oxidized coenzyme F420-0 + GMP + H(+). Its pathway is cofactor biosynthesis; coenzyme F420 biosynthesis. Functionally, catalyzes the transfer of the 2-phospholactate moiety from (2S)-lactyl-2-diphospho-5'-guanosine to 7,8-didemethyl-8-hydroxy-5-deazariboflavin (FO) with the formation of oxidized coenzyme F420-0 and GMP. The protein is 2-phospho-L-lactate transferase of Methanococcus maripaludis (strain C5 / ATCC BAA-1333).